The primary structure comprises 499 residues: GTPase Der (499 aa).

EngA-type G domains follow at residues 3–166 (PVVA…LETL) and 213–386 (IKFA…QSAT). Residues 9–16 (GRPNVGKS), 56–60 (DTGGI), 118–121 (NKTD), 219–226 (GRPNVGKS), 266–270 (DTAGV), and 331–334 (NKWD) each bind GTP. The region spanning 387–471 (RRTSTAMLTR…PVRVEFQESA (85 aa)) is the KH-like domain.

This sequence belongs to the TRAFAC class TrmE-Era-EngA-EngB-Septin-like GTPase superfamily. EngA (Der) GTPase family. As to quaternary structure, associates with the 50S ribosomal subunit.

Functionally, GTPase that plays an essential role in the late steps of ribosome biogenesis. In Aeromonas hydrophila subsp. hydrophila (strain ATCC 7966 / DSM 30187 / BCRC 13018 / CCUG 14551 / JCM 1027 / KCTC 2358 / NCIMB 9240 / NCTC 8049), this protein is GTPase Der.